Consider the following 35-residue polypeptide: Photosystem II reaction center protein T (35 aa).

Residues 3–23 traverse the membrane as a helical segment; the sequence is ALVYTFLLVSTLGIIFFAIFF.

It belongs to the PsbT family. In terms of assembly, PSII is composed of 1 copy each of membrane proteins PsbA, PsbB, PsbC, PsbD, PsbE, PsbF, PsbH, PsbI, PsbJ, PsbK, PsbL, PsbM, PsbT, PsbY, PsbZ, Psb30/Ycf12, at least 3 peripheral proteins of the oxygen-evolving complex and a large number of cofactors. It forms dimeric complexes.

It is found in the plastid. Its subcellular location is the chloroplast thylakoid membrane. Its function is as follows. Found at the monomer-monomer interface of the photosystem II (PS II) dimer, plays a role in assembly and dimerization of PSII. PSII is a light-driven water plastoquinone oxidoreductase, using light energy to abstract electrons from H(2)O, generating a proton gradient subsequently used for ATP formation. The polypeptide is Photosystem II reaction center protein T (Ceratophyllum demersum (Rigid hornwort)).